The primary structure comprises 115 residues: Holo-[acyl-carrier-protein] synthase (115 aa).

Mg(2+) is bound by residues Asp8 and Glu50.

This sequence belongs to the P-Pant transferase superfamily. AcpS family. The cofactor is Mg(2+).

The protein resides in the cytoplasm. It carries out the reaction apo-[ACP] + CoA = holo-[ACP] + adenosine 3',5'-bisphosphate + H(+). In terms of biological role, transfers the 4'-phosphopantetheine moiety from coenzyme A to a Ser of acyl-carrier-protein. This is Holo-[acyl-carrier-protein] synthase from Arthrobacter sp. (strain FB24).